Reading from the N-terminus, the 431-residue chain is MGQEVRYRVRGGHALHGTAFIQGAKNAVLPMIGAALLASKGRTVLRNVPVIEDVRRALELAEYVGAKVEFHEAERTIVIDATGLNDPNRAVLPASIASRFRGSVLFIPALMHRMGRARIEGVGGCNLGSRNLDFHYRGFARLGAEVTEDPERKHINVKADNLKGGRLYLDTPSHTGTENLIMAAALTPGTTVIEHAALEPEVLDVIEFLGSMGAKISGGGTGFIKVEGVSELTAVEHTVMPDRIDTGVFAMMTAATGGDVSLVGANLDHLGVARWKLEQMGVQFTQQGAVLRVRRDPNVPLRPINAVTSPFPGFATDLQPPLMALATLAEGESYIREAIFDGRFALADELNKMGAKIEVEGNRAIVHGPSELHGTKVTAHDLRCGAGAIMAGLVAKGETIVSPAYQVDRGHSHFATRLSALGADVVREEVS.

25-26 serves as a coordination point for phosphoenolpyruvate; it reads KN. UDP-N-acetyl-alpha-D-glucosamine is bound at residue R101. C125 acts as the Proton donor in catalysis. C125 is subject to 2-(S-cysteinyl)pyruvic acid O-phosphothioketal. UDP-N-acetyl-alpha-D-glucosamine contacts are provided by D317 and I339.

This sequence belongs to the EPSP synthase family. MurA subfamily.

Its subcellular location is the cytoplasm. It carries out the reaction phosphoenolpyruvate + UDP-N-acetyl-alpha-D-glucosamine = UDP-N-acetyl-3-O-(1-carboxyvinyl)-alpha-D-glucosamine + phosphate. The protein operates within cell wall biogenesis; peptidoglycan biosynthesis. Functionally, cell wall formation. Adds enolpyruvyl to UDP-N-acetylglucosamine. The protein is UDP-N-acetylglucosamine 1-carboxyvinyltransferase of Thermobifida fusca (strain YX).